Here is a 662-residue protein sequence, read N- to C-terminus: Probable actin-related protein 8 (662 aa).

Basic and acidic residues-rich tracts occupy residues 50-59 (AGEKDAKETE) and 67-77 (TKQDDSKKSQV). A disordered region spans residues 50–92 (AGEKDAKETESESANGDTKQDDSKKSQVEEEEDGIEESELGEE). Positions 78–89 (EEEEDGIEESEL) are enriched in acidic residues. Residue 339-342 (DMGA) participates in ATP binding.

It belongs to the actin family. Component of the chromatin remodeling Ino80 complex. Exists as monomers and dimers, but the dimer is most probably the biologically relevant form required for stable interactions with histones that exploits the twofold symmetry of the nucleosome core.

The protein resides in the nucleus. Its function is as follows. Probably involved in transcription regulation via its interaction with the INO80 complex, a chromatin remodeling complex. Exhibits low basal ATPase activity, and unable to polymerize. Strongly prefer nucleosomes and H3-H4 tetramers over H2A-H2B dimers, suggesting it may act as a nucleosome recognition module within the complex. The chain is Probable actin-related protein 8 from Schizosaccharomyces pombe (strain 972 / ATCC 24843) (Fission yeast).